The sequence spans 116 residues: Ribonuclease P protein component (116 aa).

The protein belongs to the RnpA family. As to quaternary structure, consists of a catalytic RNA component (M1 or rnpB) and a protein subunit.

The catalysed reaction is Endonucleolytic cleavage of RNA, removing 5'-extranucleotides from tRNA precursor.. In terms of biological role, RNaseP catalyzes the removal of the 5'-leader sequence from pre-tRNA to produce the mature 5'-terminus. It can also cleave other RNA substrates such as 4.5S RNA. The protein component plays an auxiliary but essential role in vivo by binding to the 5'-leader sequence and broadening the substrate specificity of the ribozyme. The chain is Ribonuclease P protein component from Carboxydothermus hydrogenoformans (strain ATCC BAA-161 / DSM 6008 / Z-2901).